Here is a 251-residue protein sequence, read N- to C-terminus: Protein CMS1 (251 aa).

Residues 1–37 (MSLDNDINTKKRKLQDDEKPRKKRKHKRPTRDDDADL) are disordered.

The protein belongs to the CMS1 family.

The protein resides in the nucleus. Its function is as follows. May play a role in the regulation of DNA replication and cell cycle control. The sequence is that of Protein CMS1 (CSM1) from Chaetomium thermophilum (strain DSM 1495 / CBS 144.50 / IMI 039719) (Thermochaetoides thermophila).